Here is a 78-residue protein sequence, read N- to C-terminus: uncharacterized protein (78 aa).

This is an uncharacterized protein from Amsacta (AmEPV).